A 487-amino-acid chain; its full sequence is MNTFPLFFKLTNQPVLIVGGGEVAQRKADLLSRAGACITILAPQISQEIHQLLSDERHTLITAHYDKKYIDGKRIVIAGTDDEALNHQVHADCKALNIPVNVVDTPPLCDFIFPAIVDRNPIVIGISSNGKAPVLARLTRARLETLIPQGYGKLAKLAGDMRDEVKSKIPTLTGRRQFWEKAFEGKVSELMFAGRSVEAEQALKQQLEQTHQQLSSNSDVKQADPKSVGEVYIVGAGPGDPELLTFKALRLMQQADIVYYDALVSREVLDLCRRDADKVFVGKKRSNHAVAQQGINQLMIDAASSGKRVVRLKGGDPFVFGRGGEEIQALRAAGIAYQVVPGITAAGAASCYTGIPLTHRDYAQSVRFVTGFLKSGEPNTGFAALTNPNETVIFYMGLHSLERLTKGLMDAGRSPQTPIAIISQASMPTQQVMTGTLADIVAKHEANPLPTPALLIVGEVAKLHDELAWYGEHIVNTDQQAHALNML.

Positions 1–203 (MNTFPLFFKL…GRSVEAEQAL (203 aa)) are precorrin-2 dehydrogenase /sirohydrochlorin ferrochelatase. Residues 22-23 (EV) and 43-44 (PQ) contribute to the NAD(+) site. S128 is subject to Phosphoserine. The tract at residues 229–487 (GEVYIVGAGP…DQQAHALNML (259 aa)) is uroporphyrinogen-III C-methyltransferase. P238 contributes to the S-adenosyl-L-methionine binding site. D261 acts as the Proton acceptor in catalysis. K283 acts as the Proton donor in catalysis. Residues 314–316 (GGD), V319, 344–345 (TA), M396, and A425 each bind S-adenosyl-L-methionine.

The protein in the N-terminal section; belongs to the precorrin-2 dehydrogenase / sirohydrochlorin ferrochelatase family. In the C-terminal section; belongs to the precorrin methyltransferase family.

It carries out the reaction uroporphyrinogen III + 2 S-adenosyl-L-methionine = precorrin-2 + 2 S-adenosyl-L-homocysteine + H(+). The catalysed reaction is precorrin-2 + NAD(+) = sirohydrochlorin + NADH + 2 H(+). It catalyses the reaction siroheme + 2 H(+) = sirohydrochlorin + Fe(2+). Its pathway is cofactor biosynthesis; adenosylcobalamin biosynthesis; precorrin-2 from uroporphyrinogen III: step 1/1. The protein operates within cofactor biosynthesis; adenosylcobalamin biosynthesis; sirohydrochlorin from precorrin-2: step 1/1. It participates in porphyrin-containing compound metabolism; siroheme biosynthesis; precorrin-2 from uroporphyrinogen III: step 1/1. It functions in the pathway porphyrin-containing compound metabolism; siroheme biosynthesis; siroheme from sirohydrochlorin: step 1/1. Its pathway is porphyrin-containing compound metabolism; siroheme biosynthesis; sirohydrochlorin from precorrin-2: step 1/1. In terms of biological role, multifunctional enzyme that catalyzes the SAM-dependent methylations of uroporphyrinogen III at position C-2 and C-7 to form precorrin-2 via precorrin-1. Then it catalyzes the NAD-dependent ring dehydrogenation of precorrin-2 to yield sirohydrochlorin. Finally, it catalyzes the ferrochelation of sirohydrochlorin to yield siroheme. The polypeptide is Siroheme synthase (Psychrobacter sp. (strain PRwf-1)).